The following is a 607-amino-acid chain: Elongation factor 4 (607 aa).

A tr-type G domain is found at 11 to 193 (ENIRNFSIIA…KIVEVVPPPE (183 aa)). Residues 23-28 (DHGKST) and 140-143 (NKID) contribute to the GTP site.

Belongs to the TRAFAC class translation factor GTPase superfamily. Classic translation factor GTPase family. LepA subfamily.

The protein resides in the cell membrane. The enzyme catalyses GTP + H2O = GDP + phosphate + H(+). Required for accurate and efficient protein synthesis under certain stress conditions. May act as a fidelity factor of the translation reaction, by catalyzing a one-codon backward translocation of tRNAs on improperly translocated ribosomes. Back-translocation proceeds from a post-translocation (POST) complex to a pre-translocation (PRE) complex, thus giving elongation factor G a second chance to translocate the tRNAs correctly. Binds to ribosomes in a GTP-dependent manner. The sequence is that of Elongation factor 4 from Staphylococcus haemolyticus (strain JCSC1435).